Consider the following 1085-residue polypeptide: Translation factor GUF1 homolog, mitochondrial (1085 aa).

The 178-residue stretch at 232–409 (KYIRNFCILA…RIISDIPPPI (178 aa)) folds into the tr-type G domain. Residues 241–248 (AHIDSGKS), 302–306 (DTPGH), and 356–359 (NKID) contribute to the GTP site.

It belongs to the TRAFAC class translation factor GTPase superfamily. Classic translation factor GTPase family. LepA subfamily.

Its subcellular location is the mitochondrion inner membrane. It carries out the reaction GTP + H2O = GDP + phosphate + H(+). In terms of biological role, promotes mitochondrial protein synthesis. May act as a fidelity factor of the translation reaction, by catalyzing a one-codon backward translocation of tRNAs on improperly translocated ribosomes. Binds to mitochondrial ribosomes in a GTP-dependent manner. This chain is Translation factor GUF1 homolog, mitochondrial, found in Plasmodium falciparum (isolate 3D7).